Consider the following 318-residue polypeptide: Taste receptor type 2 member 60 (318 aa).

Residues 1 to 7 (MNGDHMV) are Extracellular-facing. The helical transmembrane segment at 8 to 28 (LGSSVTDKKAIILVTILLLLR) threads the bilayer. At 29–40 (LVAIAGNGFITA) the chain is on the cytoplasmic side. A helical membrane pass occupies residues 41 to 61 (ALGVEWVLRRMLLPCDKLLVS). At 62–88 (LGASRFCLQSVVMGKTIYVFLHPMAFP) the chain is on the extracellular side. A helical membrane pass occupies residues 89–109 (YNPVLQFLAFQWDFLNAATLW). Residues 110-128 (SSTWLSVFYCVKIATFTHP) are Cytoplasmic-facing. A helical membrane pass occupies residues 129–149 (VFFWLKHKLSGWLPWMLFSSV). The Extracellular segment spans residues 150–183 (GLSSFTTILFFIGNHRMYQNYLRNHLQPWNVTGD). An N-linked (GlcNAc...) asparagine glycan is attached at asparagine 179. A helical transmembrane segment spans residues 184–204 (SIRSYCEKFYLFPLKMITWTM). Topologically, residues 205 to 234 (PTAVFFICMILLITSLGRHRKKALLTTSGF) are cytoplasmic. A helical transmembrane segment spans residues 235-255 (REPSVQAHIKALLALLSFAML). The Extracellular segment spans residues 256–264 (FISYFLSLV). The chain crosses the membrane as a helical span at residues 265 to 285 (FSAAGIFPPLDFKFWVWESVI). Over 286 to 318 (YLCAAVHPIILLFSNCRLRAVLKSRRSSRCGTP) the chain is Cytoplasmic.

The protein belongs to the G-protein coupled receptor T2R family. As to expression, expressed in subsets of taste receptor cells of the tongue and exclusively in gustducin-positive cells.

The protein localises to the membrane. Functionally, receptor that may play a role in the perception of bitterness and is gustducin-linked. May play a role in sensing the chemical composition of the gastrointestinal content. The activity of this receptor may stimulate alpha gustducin, mediate PLC-beta-2 activation and lead to the gating of TRPM5. This chain is Taste receptor type 2 member 60 (TAS2R60), found in Homo sapiens (Human).